Here is a 92-residue protein sequence, read N- to C-terminus: Probable Fe(2+)-trafficking protein (92 aa).

Belongs to the Fe(2+)-trafficking protein family.

Could be a mediator in iron transactions between iron acquisition and iron-requiring processes, such as synthesis and/or repair of Fe-S clusters in biosynthetic enzymes. The sequence is that of Probable Fe(2+)-trafficking protein from Shewanella halifaxensis (strain HAW-EB4).